The sequence spans 308 residues: Ornithine carbamoyltransferase (308 aa).

Residues 57-60 (STRT), glutamine 84, arginine 108, and 135-138 (HPCQ) contribute to the carbamoyl phosphate site. Residues asparagine 166, aspartate 224, and 228-229 (SM) each bind L-ornithine. Residues 264–265 (CL) and arginine 292 each bind carbamoyl phosphate.

Belongs to the aspartate/ornithine carbamoyltransferase superfamily. OTCase family.

The protein localises to the cytoplasm. The enzyme catalyses carbamoyl phosphate + L-ornithine = L-citrulline + phosphate + H(+). It functions in the pathway amino-acid degradation; L-arginine degradation via ADI pathway; carbamoyl phosphate from L-arginine: step 2/2. Functionally, reversibly catalyzes the transfer of the carbamoyl group from carbamoyl phosphate (CP) to the N(epsilon) atom of ornithine (ORN) to produce L-citrulline. This Ralstonia pickettii (strain 12J) protein is Ornithine carbamoyltransferase.